Reading from the N-terminus, the 187-residue chain is GTP cyclohydrolase 1 (187 aa).

The Zn(2+) site is built by Cys76, His79, and Cys148.

It belongs to the GTP cyclohydrolase I family. As to quaternary structure, toroid-shaped homodecamer, composed of two pentamers of five dimers.

The catalysed reaction is GTP + H2O = 7,8-dihydroneopterin 3'-triphosphate + formate + H(+). It participates in cofactor biosynthesis; 7,8-dihydroneopterin triphosphate biosynthesis; 7,8-dihydroneopterin triphosphate from GTP: step 1/1. The polypeptide is GTP cyclohydrolase 1 (Streptococcus agalactiae serotype Ia (strain ATCC 27591 / A909 / CDC SS700)).